We begin with the raw amino-acid sequence, 250 residues long: Uracil-DNA glycosylase (250 aa).

D78 functions as the Proton acceptor in the catalytic mechanism. The tract at residues 228 to 250 (RGQKPVDWSGEQNNASRQGEFAL) is disordered.

The protein belongs to the uracil-DNA glycosylase (UDG) superfamily. UNG family.

Its subcellular location is the cytoplasm. It catalyses the reaction Hydrolyzes single-stranded DNA or mismatched double-stranded DNA and polynucleotides, releasing free uracil.. Functionally, excises uracil residues from the DNA which can arise as a result of misincorporation of dUMP residues by DNA polymerase or due to deamination of cytosine. This Bordetella parapertussis (strain 12822 / ATCC BAA-587 / NCTC 13253) protein is Uracil-DNA glycosylase.